The following is a 422-amino-acid chain: MRIEDVRTVPGLSGFFFDDQQAIKDGATQTGFAYDGQPVTDGFDRIREAGEALIVEIELADGSIATGDCAAVQYSGAGGRDPLFRAEKYRPVVEGAVADALRGQDATQFGANATMLEEMSPQRSGGDQLHTAVRYGVSQALLNAAAQARGVTPTDVLADTYDTEPATSPVPVFGQSGDERRINAEKMLIKGVPVLPHGLFNSVEKVGENGEGLRDYLAWLSDRATALGPEPYSPRFHVDVYGILGKVFGPPYDRTEVTDYFETLREAAAPYPLQVEGPMDAGGRQAQITEMAELREGLADAGVDVDIVADEWCNTFEDVQAFVDAEAADLVQIKTPDLGGIQRSAEAVLYCDGTDTRAYVGGTCNETVTSARACAHVALATDAAQVLAKPGMGFDEGFMVVTNEMRRALARRDATQEVPADD.

Q175 is a (2S,3S)-3-methyl-L-aspartate binding site. 3 residues coordinate Mg(2+): D239, E276, and D310. Position 332 (Q332) interacts with (2S,3S)-3-methyl-L-aspartate. The active-site Proton acceptor is K334. Residue 363–364 (TC) coordinates (2S,3S)-3-methyl-L-aspartate.

This sequence belongs to the methylaspartate ammonia-lyase family. As to quaternary structure, homodimer. The cofactor is Mg(2+).

It catalyses the reaction (2S,3S)-3-methyl-L-aspartate = mesaconate + NH4(+). It functions in the pathway amino-acid degradation; L-glutamate degradation via mesaconate pathway; acetate and pyruvate from L-glutamate: step 2/4. Functionally, involved in the methylaspartate cycle. Catalyzes the formation of the alpha,beta-unsaturated bond by the reversible anti elimination of ammonia from L-threo-beta-methylaspartate (L-threo-(2S,3S)-3-methylaspartate) to give mesaconate. This Haloarcula marismortui (strain ATCC 43049 / DSM 3752 / JCM 8966 / VKM B-1809) (Halobacterium marismortui) protein is Methylaspartate ammonia-lyase (mal).